The sequence spans 190 residues: RNA-binding protein OPG065 (190 aa).

The Z-binding domain occupies 5-70 (YIDERSNAEI…DIPPRWFMTT (66 aa)). In terms of domain architecture, DRBM spans 117–184 (NPVTVINEYC…AKLAVDKLLG (68 aa)).

Belongs to the orthopoxvirus OPG065 family. As to quaternary structure, interacts with host G1P2/ISG15. Interacts with host EIF2AK2/PKR. Interacts with host ZBP1.

RNA-binding protein that plays a role in the inhibition of multiple cellular antiviral responses activated by double-stranded RNA (dsRNA), such as inhibition of PKR activation, necroptosis, and IFN-mediated antiviral activities. Recognizes and binds Z-RNA structures via its Z-binding domain and dsRNA via its DRBM domain: RNA-binding activity is required to escape host ZBP1-dependent necroptosis. Mechanistically, the Z-binding domain binds Z-RNAs that are produced during vaccinia virus infection, thereby competing with Z-RNA detection by host ZBP1, suppressing ZBP1-dependent necroptosis. Acts as a key inhibitor of the interferon response by blocking the phosphorylation and subsequent activation of IRF3 and IRF7 kinases that are required for interferon-alpha gene expression. Inhibits NF-kappa-B activation and the ubiquitin-like protein ISG15, which is an early antiviral protein. The binding with host ISG15 subsequently blocks host ISGylation. The polypeptide is RNA-binding protein OPG065 (OPG065) (Vaccinia virus (strain Western Reserve) (VACV)).